Consider the following 585-residue polypeptide: Arginine--tRNA ligase (585 aa).

Positions 126-136 match the 'HIGH' region motif; that stretch reads PNIAKEMHVGH.

The protein belongs to the class-I aminoacyl-tRNA synthetase family. As to quaternary structure, monomer.

The protein localises to the cytoplasm. The catalysed reaction is tRNA(Arg) + L-arginine + ATP = L-arginyl-tRNA(Arg) + AMP + diphosphate. This chain is Arginine--tRNA ligase, found in Picosynechococcus sp. (strain ATCC 27264 / PCC 7002 / PR-6) (Agmenellum quadruplicatum).